The primary structure comprises 106 residues: Iron-sulfur cluster assembly protein CyaY (106 aa).

This sequence belongs to the frataxin family.

Its function is as follows. Involved in iron-sulfur (Fe-S) cluster assembly. May act as a regulator of Fe-S biogenesis. This is Iron-sulfur cluster assembly protein CyaY from Salmonella heidelberg (strain SL476).